Reading from the N-terminus, the 393-residue chain is MAKESYKRDKPHVNIGTIGHVDHGKTTLTAAITSVLAKSGKAAAREFGDIDKAPEERERGITISTAHVEYQTDKRHYAHIDCPGHADYIKNMITGAAQMDGAILVVAGTDGPMPQTREHILLARQVNVPALVVFLNKVDIADPELLELVEMELRELLTEYGFPGDDIPIIKGSALNALNGDPEGEKAIMELMDAVDDYIPEPVRDVDKPFLMPVEDVFSISGRGTVGTGRIERGIIKVGNEVEIVGIKPTTKSVVTGIEMFQKTLDEGQAGDNAGLLLRGVDKEALERGMVIAKPGSITPHTKFKAEVYILKKEEGGRHTPFFNGYRPQFYFRTTDVTGSVTLPEGVEMVMPGDNLSVDVELIAPIAMEESLRFAIREGGRTVGAGSVTKIVE.

Residues lysine 10–valine 203 form the tr-type G domain. The G1 stretch occupies residues glycine 19–threonine 26. GTP is bound at residue glycine 19–threonine 26. Threonine 26 is a Mg(2+) binding site. Positions glycine 60–serine 64 are G2. Residues aspartate 81–glycine 84 are G3. Residues aspartate 81–histidine 85 and asparagine 136–aspartate 139 each bind GTP. The interval asparagine 136 to aspartate 139 is G4. The G5 stretch occupies residues serine 173–leucine 175.

The protein belongs to the TRAFAC class translation factor GTPase superfamily. Classic translation factor GTPase family. EF-Tu/EF-1A subfamily. Monomer.

The protein resides in the cytoplasm. It carries out the reaction GTP + H2O = GDP + phosphate + H(+). Functionally, GTP hydrolase that promotes the GTP-dependent binding of aminoacyl-tRNA to the A-site of ribosomes during protein biosynthesis. This is Elongation factor Tu from Chlorobaculum parvum (strain DSM 263 / NCIMB 8327) (Chlorobium vibrioforme subsp. thiosulfatophilum).